Consider the following 322-residue polypeptide: uncharacterized protein (322 aa).

One can recognise a Radical SAM core domain in the interval 26-267 (HFGHKVFKVA…CDQLEIIPPE (242 aa)). Positions 42, 54, and 57 each coordinate [4Fe-4S] cluster.

It belongs to the radical SAM superfamily. [4Fe-4S] cluster is required as a cofactor.

This is an uncharacterized protein from Bacillus subtilis (strain 168).